We begin with the raw amino-acid sequence, 461 residues long: Signal recognition particle receptor FtsY (461 aa).

Residues 105-138 (FESLYNVAKIYHQLEKPDKALEYAQRAEKLVPYE) form a TPR repeat. Residues 267–274 (GVNGSGKT), 349–353 (DTAGR), and 413–416 (TKLD) each bind GTP.

Belongs to the GTP-binding SRP family. FtsY subfamily. Part of the signal recognition particle protein translocation system, which is composed of SRP and FtsY.

Its subcellular location is the cell inner membrane. The protein resides in the cytoplasm. It carries out the reaction GTP + H2O = GDP + phosphate + H(+). Involved in targeting and insertion of nascent membrane proteins into the cytoplasmic membrane. Acts as a receptor for the complex formed by the signal recognition particle (SRP) and the ribosome-nascent chain (RNC). This is Signal recognition particle receptor FtsY from Aquifex aeolicus (strain VF5).